The primary structure comprises 115 residues: Large ribosomal subunit protein bL20 (115 aa).

It belongs to the bacterial ribosomal protein bL20 family.

In terms of biological role, binds directly to 23S ribosomal RNA and is necessary for the in vitro assembly process of the 50S ribosomal subunit. It is not involved in the protein synthesizing functions of that subunit. This Cytophaga hutchinsonii (strain ATCC 33406 / DSM 1761 / CIP 103989 / NBRC 15051 / NCIMB 9469 / D465) protein is Large ribosomal subunit protein bL20.